Consider the following 113-residue polypeptide: CRISPR-associated endoribonuclease Cas2 (113 aa).

Asp33 provides a ligand contact to Mg(2+).

It belongs to the CRISPR-associated endoribonuclease Cas2 protein family. As to quaternary structure, homodimer, forms a heterotetramer with a Cas1 homodimer. Mg(2+) is required as a cofactor.

Its function is as follows. CRISPR (clustered regularly interspaced short palindromic repeat), is an adaptive immune system that provides protection against mobile genetic elements (viruses, transposable elements and conjugative plasmids). CRISPR clusters contain sequences complementary to antecedent mobile elements and target invading nucleic acids. CRISPR clusters are transcribed and processed into CRISPR RNA (crRNA). Functions as a ssRNA-specific endoribonuclease. Involved in the integration of spacer DNA into the CRISPR cassette. The type III-A Csm effector complex binds crRNA and acts as a crRNA-guided RNase, DNase and cyclic oligoadenylate synthase; binding of target RNA cognate to the crRNA is required for all activities. The protein is CRISPR-associated endoribonuclease Cas2 of Mycobacterium tuberculosis (strain CDC 1551 / Oshkosh).